The sequence spans 427 residues: 3-phosphoshikimate 1-carboxyvinyltransferase (427 aa).

The 3-phosphoshikimate site is built by Lys-20, Ser-21, and Arg-25. Lys-20 contributes to the phosphoenolpyruvate binding site. Phosphoenolpyruvate contacts are provided by Gly-92 and Arg-120. Positions 166, 168, 312, and 339 each coordinate 3-phosphoshikimate. Gln-168 is a binding site for phosphoenolpyruvate. Asp-312 serves as the catalytic Proton acceptor. Phosphoenolpyruvate is bound by residues Arg-343 and Arg-385.

It belongs to the EPSP synthase family. Monomer.

The protein localises to the cytoplasm. It catalyses the reaction 3-phosphoshikimate + phosphoenolpyruvate = 5-O-(1-carboxyvinyl)-3-phosphoshikimate + phosphate. It functions in the pathway metabolic intermediate biosynthesis; chorismate biosynthesis; chorismate from D-erythrose 4-phosphate and phosphoenolpyruvate: step 6/7. Functionally, catalyzes the transfer of the enolpyruvyl moiety of phosphoenolpyruvate (PEP) to the 5-hydroxyl of shikimate-3-phosphate (S3P) to produce enolpyruvyl shikimate-3-phosphate and inorganic phosphate. In Streptococcus agalactiae serotype III (strain NEM316), this protein is 3-phosphoshikimate 1-carboxyvinyltransferase.